Reading from the N-terminus, the 738-residue chain is Nucleoprotein (738 aa).

Positions Val-334–Leu-363 form a coiled coil. A disordered region spans residues Gly-418 to Ile-640. A compositionally biased stretch (acidic residues) spans Pro-461–Ala-476. Over residues Pro-544–Pro-564 the composition is skewed to polar residues. Acidic residues predominate over residues Glu-567–Glu-594. Polar residues predominate over residues Val-616–Ser-625.

This sequence belongs to the filoviruses nucleoprotein family. Homooligomer. Homomultimerizes to form the nucleocapsid. Binds to viral genomic RNA. Interacts with VP35 and VP30 to form the nucleocapsid. Interacts with host PPP2R5C; this interaction leads to VP30 dephosphorylation and viral transcription. Interacts with VP24; this interaction facilitates nucleocapsid assembly and genome packaging. Interacts with matrix protein VP40; this interaction allows recruitment of the nucleocapsid into progeny virions. Interacts with host STAU1. Interacts with host NXF1 (via RNA-binding domain); this interaction recruits NXF1 to the inclusion bodies were viral replication takes place, probably to export viral mRNA-NXF1 complexes from these sites. Interacts with host CCDC92; this interaction sequesters NP in the host cytoplasm. Interacts with host TRIM14. In terms of processing, phosphorylated and O-glycosylated by host. Acetylated by host EP300 in vitro.

The protein resides in the virion. The protein localises to the host cytoplasm. Its function is as follows. Oligomerizes into helical capsid to encapsidate the viral genome, protecting it from nucleases and the cellular innate immune response. VP35 binds to and stabilizes monomeric NP, keeping it soluble. Upon virus replication, NP is recruited to bind cooperatively viral genomic RNA and VP35 is released. The encapsidated genomic RNA is termed the nucleocapsid and serves as template for transcription and replication. The nucleocapsid is helical with a pitch of 10.81 NP per turn and a diameter of about 22nm. Each NP binds to six nucleotides of viral genomic RNA, three being exposed to the solvant and three hidden into the nucleocapsid. Also recruits host PPP2R5C phosphatase to dephosphorylate VP30 and thereby promote viral transcription. Upon virion assembly and budding, NP binds to VP24 and possibly host STAU1. This Sudan ebolavirus (strain Human/Uganda/Gulu/2000) (SEBOV) protein is Nucleoprotein (NP).